Reading from the N-terminus, the 248-residue chain is Adenosylcobinamide-GDP ribazoletransferase (248 aa).

The next 7 helical transmembrane spans lie at 24 to 44, 70 to 90, 106 to 126, 134 to 154, 157 to 177, 188 to 210, and 228 to 248; these read EINL…IGAW, IIIT…GLFS, VGAN…SLFL, IGWL…LLFA, TYAG…WWPV, LGLF…TIIY, and AGGQ…WGLI.

Belongs to the CobS family. Requires Mg(2+) as cofactor.

The protein resides in the cell membrane. The enzyme catalyses alpha-ribazole + adenosylcob(III)inamide-GDP = adenosylcob(III)alamin + GMP + H(+). The catalysed reaction is alpha-ribazole 5'-phosphate + adenosylcob(III)inamide-GDP = adenosylcob(III)alamin 5'-phosphate + GMP + H(+). It participates in cofactor biosynthesis; adenosylcobalamin biosynthesis; adenosylcobalamin from cob(II)yrinate a,c-diamide: step 7/7. Functionally, joins adenosylcobinamide-GDP and alpha-ribazole to generate adenosylcobalamin (Ado-cobalamin). Also synthesizes adenosylcobalamin 5'-phosphate from adenosylcobinamide-GDP and alpha-ribazole 5'-phosphate. This Listeria monocytogenes serotype 4b (strain CLIP80459) protein is Adenosylcobinamide-GDP ribazoletransferase.